We begin with the raw amino-acid sequence, 510 residues long: Kynurenine 3-monooxygenase (510 aa).

The protein belongs to the aromatic-ring hydroxylase family. KMO subfamily. FAD serves as cofactor.

It is found in the mitochondrion outer membrane. The catalysed reaction is L-kynurenine + NADPH + O2 + H(+) = 3-hydroxy-L-kynurenine + NADP(+) + H2O. Its pathway is cofactor biosynthesis; NAD(+) biosynthesis; quinolinate from L-kynurenine: step 1/3. In terms of biological role, catalyzes the hydroxylation of L-kynurenine (L-Kyn) to form 3-hydroxy-L-kynurenine (L-3OHKyn). Required for synthesis of quinolinic acid. The polypeptide is Kynurenine 3-monooxygenase (bna4) (Aspergillus oryzae (strain ATCC 42149 / RIB 40) (Yellow koji mold)).